Consider the following 968-residue polypeptide: MPFTLGQRWISDTESELGLGTVVAMDARTVTLLFPATGENRLYARSDSPVTRVMFNPGDTITSHEGWQLQIDEVKEENGLLAYTGTRLDTEETAVTLREVLLDSKLVFSKPQDRLFAGQIDRMDRFALRYRARKFQSEQYRMPWSGLRGQRTSLIPHQLNIAHDVGRRHAPRVLLADEVGLGKTIEAGMILHQQLLSGAAERVLIIVPETLQHQWLVEMLRRFNLRFALFDDERYTEAQHDAYNPFETEQLVICSLDFARRNKQRLEHLCDAQWDLLVVDEAHHLVWSEDAPSREYMAIEQLAERVPGVLLLTATPEQLGMESHFARLRLLDPSRFHDFEQFVEEQKNYRPVADAVAMLLAGNKLSNEELNMLGDLIGEQDIEPLLQTANSDRDGAQNARQELVSMLMDRHGTSRVLFRNTRNGVKGFPKRELHTIKLPLPTQYQTAIKVSGIMGARKSAEDRARDMLYPEQIYQEFEGDSGTWWNFDPRVEWLMGHLTSHRSQKVLVICAKAATALQLEQVLREREGIRAAVFHEGMSIIERDRAAAWFSEEDSGAQVLLCSEIGSEGRNFQFASNLVMFDLPFNPDLLEQRIGRLDRIGQAHDIQIHVPYLEKTAQSVLVRWYHEGLDAFEHTCPTGRAIYDTVYHDLIAYLATPENTDGFDALIKTCREQHEALKAQLEQGRDRLLEIHSNGGEKAQALAESIEEQDDDTSLIAFAMNLFDIVGINQDDRGENLIVLTPSDHMLVPDFPGLPEDGCTITFERDVALSREDAQFVTWEHPLIRNGLDLILSGDTGSSTISLLKNKALPVGTLLVELVYVVEAQAPKHLQLNRFLPPTPVRMLLDKNGNNLAAQVEFETFNRQLSAVNRHTGSKLVNAVQQDVHAILQLGEAQAEKSARALIDAARSEADEKLSAELSRLEALRAVNPNIRDDELAAIDSNRQQVMESLDQANWRLDALRLIVVTHQ.

The Helicase ATP-binding domain occupies 164–334 (DVGRRHAPRV…FARLRLLDPS (171 aa)). Residue 177–184 (DEVGLGKT) coordinates ATP. The DEAH box motif lies at 280–283 (DEAH). The Helicase C-terminal domain maps to 490–644 (RVEWLMGHLT…TCPTGRAIYD (155 aa)).

This sequence belongs to the SNF2/RAD54 helicase family. RapA subfamily. As to quaternary structure, interacts with the RNAP. Has a higher affinity for the core RNAP than for the holoenzyme. Its ATPase activity is stimulated by binding to RNAP.

Functionally, transcription regulator that activates transcription by stimulating RNA polymerase (RNAP) recycling in case of stress conditions such as supercoiled DNA or high salt concentrations. Probably acts by releasing the RNAP, when it is trapped or immobilized on tightly supercoiled DNA. Does not activate transcription on linear DNA. Probably not involved in DNA repair. This is RNA polymerase-associated protein RapA from Citrobacter koseri (strain ATCC BAA-895 / CDC 4225-83 / SGSC4696).